We begin with the raw amino-acid sequence, 660 residues long: DNA mismatch repair protein MutL (660 aa).

Belongs to the DNA mismatch repair MutL/HexB family.

In terms of biological role, this protein is involved in the repair of mismatches in DNA. It is required for dam-dependent methyl-directed DNA mismatch repair. May act as a 'molecular matchmaker', a protein that promotes the formation of a stable complex between two or more DNA-binding proteins in an ATP-dependent manner without itself being part of a final effector complex. The polypeptide is DNA mismatch repair protein MutL (Streptococcus equi subsp. zooepidemicus (strain MGCS10565)).